Consider the following 184-residue polypeptide: Putative YfeABCD regulator YfeE (184 aa).

The next 3 helical transmembrane spans lie at 15-35 (IAGW…IINF), 84-104 (LSAG…GLSL), and 162-182 (ILPS…GIMI).

It to E.coli YniB.

The protein localises to the cell membrane. Putative regulator of YfeABCD, an ABC transporter locus involved in inorganic iron transport. The chain is Putative YfeABCD regulator YfeE (yfeE) from Yersinia pestis.